A 288-amino-acid polypeptide reads, in one-letter code: Pantothenate synthetase (288 aa).

Position 27–34 (Met27–His34) interacts with ATP. Catalysis depends on His34, which acts as the Proton donor. Residues Gln58 and Gln150 each coordinate (R)-pantoate. Gln58 lines the beta-alanine pocket. ATP-binding positions include Leu173 and Tyr181 to Arg184.

It belongs to the pantothenate synthetase family. Homodimer.

The protein resides in the cytoplasm. The enzyme catalyses (R)-pantoate + beta-alanine + ATP = (R)-pantothenate + AMP + diphosphate + H(+). It functions in the pathway cofactor biosynthesis; (R)-pantothenate biosynthesis; (R)-pantothenate from (R)-pantoate and beta-alanine: step 1/1. Catalyzes the condensation of pantoate with beta-alanine in an ATP-dependent reaction via a pantoyl-adenylate intermediate. This Tropheryma whipplei (strain TW08/27) (Whipple's bacillus) protein is Pantothenate synthetase.